The sequence spans 153 residues: Protein SprT-like (153 aa).

Residues 6 to 148 (LQQLTEQLSL…CGKCGGKIKE (143 aa)) enclose the SprT-like domain. Histidine 67 is a Zn(2+) binding site. The active site involves glutamate 68. Histidine 71 provides a ligand contact to Zn(2+).

The protein belongs to the SprT family. Requires Zn(2+) as cofactor.

The protein localises to the cytoplasm. The polypeptide is Protein SprT-like (Bacillus licheniformis (strain ATCC 14580 / DSM 13 / JCM 2505 / CCUG 7422 / NBRC 12200 / NCIMB 9375 / NCTC 10341 / NRRL NRS-1264 / Gibson 46)).